Consider the following 98-residue polypeptide: NADH-ubiquinone oxidoreductase chain 4L (98 aa).

The next 3 membrane-spanning stretches (helical) occupy residues 1 to 21 (MSMVYINIFLAFTLSFMGLLI), 30 to 50 (LLCLEGMMLSLFVMMTVTILT), and 61 to 81 (IILLVFAACEAALGLSLLVMI).

Belongs to the complex I subunit 4L family. Core subunit of respiratory chain NADH dehydrogenase (Complex I) which is composed of 45 different subunits.

The protein localises to the mitochondrion inner membrane. It carries out the reaction a ubiquinone + NADH + 5 H(+)(in) = a ubiquinol + NAD(+) + 4 H(+)(out). Core subunit of the mitochondrial membrane respiratory chain NADH dehydrogenase (Complex I) which catalyzes electron transfer from NADH through the respiratory chain, using ubiquinone as an electron acceptor. Part of the enzyme membrane arm which is embedded in the lipid bilayer and involved in proton translocation. The sequence is that of NADH-ubiquinone oxidoreductase chain 4L (MT-ND4L) from Gulo gulo (Wolverine).